The chain runs to 879 residues: Alanine--tRNA ligase (879 aa).

Positions 567, 571, 669, and 673 each coordinate Zn(2+).

It belongs to the class-II aminoacyl-tRNA synthetase family. The cofactor is Zn(2+).

It is found in the cytoplasm. The catalysed reaction is tRNA(Ala) + L-alanine + ATP = L-alanyl-tRNA(Ala) + AMP + diphosphate. Functionally, catalyzes the attachment of alanine to tRNA(Ala) in a two-step reaction: alanine is first activated by ATP to form Ala-AMP and then transferred to the acceptor end of tRNA(Ala). Also edits incorrectly charged Ser-tRNA(Ala) and Gly-tRNA(Ala) via its editing domain. The sequence is that of Alanine--tRNA ligase from Lactobacillus helveticus (strain DPC 4571).